A 76-amino-acid polypeptide reads, in one-letter code: Beta-defensin 121 (76 aa).

Positions 1–15 (MKLLLLLLTVTLLLA) are cleaved as a signal peptide. 3 disulfides stabilise this stretch: C23–C50, C30–C44, and C34–C51.

It belongs to the beta-defensin family. Abundant expression in the male reproductive tract only.

Its subcellular location is the secreted. Has antibacterial activity. The protein is Beta-defensin 121 (DEFB121) of Macaca mulatta (Rhesus macaque).